Reading from the N-terminus, the 345-residue chain is Phosphate acyltransferase (345 aa).

It belongs to the PlsX family. In terms of assembly, homodimer. Probably interacts with PlsY.

The protein resides in the cytoplasm. It catalyses the reaction a fatty acyl-[ACP] + phosphate = an acyl phosphate + holo-[ACP]. It functions in the pathway lipid metabolism; phospholipid metabolism. Its function is as follows. Catalyzes the reversible formation of acyl-phosphate (acyl-PO(4)) from acyl-[acyl-carrier-protein] (acyl-ACP). This enzyme utilizes acyl-ACP as fatty acyl donor, but not acyl-CoA. The chain is Phosphate acyltransferase from Anaplasma phagocytophilum (strain HZ).